The chain runs to 223 residues: Large ribosomal subunit protein bL21 (223 aa).

Belongs to the bacterial ribosomal protein bL21 family. In terms of assembly, part of the 50S ribosomal subunit. Contacts protein L20.

Functionally, this protein binds to 23S rRNA in the presence of protein L20. The protein is Large ribosomal subunit protein bL21 of Mesorhizobium japonicum (strain LMG 29417 / CECT 9101 / MAFF 303099) (Mesorhizobium loti (strain MAFF 303099)).